A 1450-amino-acid chain; its full sequence is DNA-directed RNA polymerase RPB1 homolog (1450 aa).

This sequence belongs to the RNA polymerase beta' chain family. As to quaternary structure, part of the viral DNA-directed RNA polymerase that consists of 8 polII-like subunits (RPB1, RPB2, RPB3, RPB5, RPB6, RPB7, RPB9, RPB10), a capping enzyme and a termination factor.

Its subcellular location is the virion. The enzyme catalyses RNA(n) + a ribonucleoside 5'-triphosphate = RNA(n+1) + diphosphate. Catalytic component of the DNA-directed RNA polymerase (RNAP) that catalyzes the transcription in the cytoplasm of viral DNA into RNA using the four ribonucleoside triphosphates as substrates. Forms the polymerase active center together with RPB2. Part of the core element with the central large cleft, the clamp element that moves to open and close the cleft and the jaws that are thought to grab the incoming DNA template. This is DNA-directed RNA polymerase RPB1 homolog from African swine fever virus (isolate Tick/South Africa/Pretoriuskop Pr4/1996) (ASFV).